Here is a 460-residue protein sequence, read N- to C-terminus: ATP synthase subunit beta (460 aa).

148–155 (GGAGVGKT) serves as a coordination point for ATP.

It belongs to the ATPase alpha/beta chains family. F-type ATPases have 2 components, CF(1) - the catalytic core - and CF(0) - the membrane proton channel. CF(1) has five subunits: alpha(3), beta(3), gamma(1), delta(1), epsilon(1). CF(0) has three main subunits: a(1), b(2) and c(9-12). The alpha and beta chains form an alternating ring which encloses part of the gamma chain. CF(1) is attached to CF(0) by a central stalk formed by the gamma and epsilon chains, while a peripheral stalk is formed by the delta and b chains.

Its subcellular location is the cell inner membrane. It carries out the reaction ATP + H2O + 4 H(+)(in) = ADP + phosphate + 5 H(+)(out). In terms of biological role, produces ATP from ADP in the presence of a proton gradient across the membrane. The catalytic sites are hosted primarily by the beta subunits. The polypeptide is ATP synthase subunit beta (Alcanivorax borkumensis (strain ATCC 700651 / DSM 11573 / NCIMB 13689 / SK2)).